The following is a 728-amino-acid chain: Sodium-dependent transporter snf-5 (728 aa).

The Cytoplasmic portion of the chain corresponds to 1–84 (MADSGSNEEA…PEEEEEKRDG (84 aa)). The tract at residues 1 to 84 (MADSGSNEEA…PEEEEEKRDG (84 aa)) is disordered. 2 stretches are compositionally biased toward low complexity: residues 29 to 50 (QQVS…STQS) and 60 to 73 (KNTT…TLDT). Residues 85–105 (FGNSFEFVLTSLGLAVGLGNI) traverse the membrane as a helical segment. The Na(+) site is built by G97, A99, V100, and N104. At 106–119 (WRFPTRAYNNGGSA) the chain is on the extracellular side. The helical transmembrane segment at 120 to 140 (FLIPYLTCAFLFGLPAVYFEF) threads the bilayer. Residues 141–162 (LTGQYQGKSPPVIFRRVRPILE) are Cytoplasmic-facing. Residues 163–183 (GVGWMGVFVAALVAIYYIVIV) traverse the membrane as a helical segment. Residues 184–285 (SWISIYMINI…PSSGMLDFGG (102 aa)) are Extracellular-facing. An intrachain disulfide couples C204 to C214. 5 N-linked (GlcNAc...) asparagine glycosylation sites follow: N210, N225, N232, N237, and N257. The chain crosses the membrane as a helical span at residues 286 to 306 (FNWPVFAAMSVCWLLTGLGIL). The Cytoplasmic portion of the chain corresponds to 307–314 (KGAKIMGK). A helical membrane pass occupies residues 315–335 (ISYVSVLVPYVLVVVLFINGV). Residues 336-364 (FQDGSGVGLEMYFGTPNYTKLYEQDTWTE) are Extracellular-facing. A glycan (N-linked (GlcNAc...) asparagine) is linked at N352. The chain crosses the membrane as a helical span at residues 365–386 (ALKQLCFSLSVGHGGLISLSSY). Residue S372 participates in Na(+) binding. Topologically, residues 387–396 (SPKRNNIFRD) are cytoplasmic. The chain crosses the membrane as a helical span at residues 397 to 417 (ALIVIIGDTTMSLVGGGAVFA). Over 418–451 (TLGYLAKATGQDVKDVVKSGLSLAFVVYPEAMTR) the chain is Extracellular. Residues 452–472 (MPVPWLWCFIFFLMLFLLGAS) form a helical membrane-spanning segment. L469 contacts Na(+). Over 473 to 495 (TEIALVDVFCSCIYDQYPRFRNR) the chain is Cytoplasmic. A helical membrane pass occupies residues 496-516 (KWIVVIAWCSVLYCIGLVFST). Residues 517–531 (RAGYYWFEMFDEYAA) lie on the Extracellular side of the membrane. A helical transmembrane segment spans residues 532–552 (GFSSVCTVVCELLVMMYIYGF). At 553 to 578 (RNVRDDITEVVGHARNKFTGAIGAHS) the chain is on the cytoplasmic side. The helical transmembrane segment at 579 to 599 (WYFTANWMVISPSIALILVGL) threads the bilayer. Residues 600-616 (SFVREYPYMGRHDIYPA) are Extracellular-facing. Residues 617-637 (VFDIFGWFLSFLPVIIVPIFM) traverse the membrane as a helical segment. The Cytoplasmic portion of the chain corresponds to 638–728 (LLNFIRCRNR…DTSSTYHQVY (91 aa)). Positions 687-699 (PWDEENVDLTDSE) are enriched in acidic residues. The tract at residues 687 to 728 (PWDEENVDLTDSESESRNAASGDVPIDDVATIDTSSTYHQVY) is disordered. Polar residues predominate over residues 718–728 (IDTSSTYHQVY).

The protein belongs to the sodium:neurotransmitter symporter (SNF) (TC 2.A.22) family. Expressed in the INT-9 cells and posterior cells of the alimentary canal of the intestine, gut epithelial cells, the pharynx of some worms, two cells of the rectal gland, and in DVA, DVB and DVC neurons and amphid sensory neurons ASI, ADF and ASK neurons.

It is found in the cell membrane. In terms of biological role, sodium-dependent amino acid transporter that mediates the uptake of the L-enantiomers of various amino acids, including L-proline and L-methionine, and also of acidic amino acids such as L-glutamic acid and L-aspartic acid. May additionally have a role in potassium-dependent amino acid absorption. In response to the availability of amino acid nutrients, may play a role in dauer formation. May play a role in promoting fertility. The protein is Sodium-dependent transporter snf-5 of Caenorhabditis elegans.